Reading from the N-terminus, the 248-residue chain is Ras-like protein family member 11B (248 aa).

The segment at 29-246 (AGRRLVKIAV…ALSAKVRTVT (218 aa)) is small GTPase-like. GTP contacts are provided by residues 40–47 (GASGVGKT), 87–94 (DTPGIQVH), and 152–155 (NKAD). Residues 205–226 (QQPSSTPEKRRTSLIPRPKSPN) form a disordered region.

The protein belongs to the small GTPase superfamily. Ras family. Widely expressed with highest levels in placenta and primary macrophages.

It catalyses the reaction GTP + H2O = GDP + phosphate + H(+). This Homo sapiens (Human) protein is Ras-like protein family member 11B.